Consider the following 330-residue polypeptide: Ketol-acid reductoisomerase (NADP(+)) (330 aa).

In terms of domain architecture, KARI N-terminal Rossmann spans 3–184; it reads LPVYYDKDID…GGGRMGVLET (182 aa). NADP(+) contacts are provided by residues 26–29, S52, and S54; that span reads YGAQ. H109 is an active-site residue. G135 provides a ligand contact to NADP(+). The KARI C-terminal knotted domain maps to 185–329; the sequence is SFKEECESDL…EILRAPFNHK (145 aa). Mg(2+) contacts are provided by D193, E197, E229, and E233. Substrate is bound at residue S254.

It belongs to the ketol-acid reductoisomerase family. Mg(2+) serves as cofactor.

The catalysed reaction is (2R)-2,3-dihydroxy-3-methylbutanoate + NADP(+) = (2S)-2-acetolactate + NADPH + H(+). The enzyme catalyses (2R,3R)-2,3-dihydroxy-3-methylpentanoate + NADP(+) = (S)-2-ethyl-2-hydroxy-3-oxobutanoate + NADPH + H(+). The protein operates within amino-acid biosynthesis; L-isoleucine biosynthesis; L-isoleucine from 2-oxobutanoate: step 2/4. It functions in the pathway amino-acid biosynthesis; L-valine biosynthesis; L-valine from pyruvate: step 2/4. Involved in the biosynthesis of branched-chain amino acids (BCAA). Catalyzes an alkyl-migration followed by a ketol-acid reduction of (S)-2-acetolactate (S2AL) to yield (R)-2,3-dihydroxy-isovalerate. In the isomerase reaction, S2AL is rearranged via a Mg-dependent methyl migration to produce 3-hydroxy-3-methyl-2-ketobutyrate (HMKB). In the reductase reaction, this 2-ketoacid undergoes a metal-dependent reduction by NADPH to yield (R)-2,3-dihydroxy-isovalerate. The chain is Ketol-acid reductoisomerase (NADP(+)) from Helicobacter pylori (strain Shi470).